Consider the following 99-residue polypeptide: UPF0213 protein YazA (99 aa).

The region spanning 4–79 (NNHFFYVVKC…KKLTRKKKEL (76 aa)) is the GIY-YIG domain.

The protein belongs to the UPF0213 family.

This Bacillus subtilis (strain 168) protein is UPF0213 protein YazA (yazA).